Reading from the N-terminus, the 337-residue chain is Inositol 2-dehydrogenase (337 aa).

It belongs to the Gfo/Idh/MocA family. Homotetramer.

The catalysed reaction is myo-inositol + NAD(+) = scyllo-inosose + NADH + H(+). In terms of biological role, involved in the oxidation of myo-inositol (MI) to 2-keto-myo-inositol (2KMI or 2-inosose). In Klebsiella pneumoniae (strain 342), this protein is Inositol 2-dehydrogenase.